Reading from the N-terminus, the 325-residue chain is Mediator of RNA polymerase II transcription subunit 30 (325 aa).

Composition is skewed to low complexity over residues 1–11 (MWKYGQNQGNQ), 109–122 (PPQQAMQQQMMGPQ), and 132–154 (GPQQQQQLQQQQQQSNLQQQQQQ). Disordered regions lie at residues 1–26 (MWKYGQNQGNQGPAGGGGGAPNMMPM) and 109–176 (PPQQ…LAIS). The segment covering 158 to 169 (GSGGAPGAGGVG) has biased composition (gly residues).

It belongs to the Mediator complex subunit 30 family. In terms of assembly, component of the Mediator complex.

It localises to the nucleus. Functionally, component of the Mediator complex, a coactivator involved in the regulated transcription of nearly all RNA polymerase II-dependent genes. Mediator functions as a bridge to convey information from gene-specific regulatory proteins to the basal RNA polymerase II transcription machinery. Mediator is recruited to promoters by direct interactions with regulatory proteins and serves as a scaffold for the assembly of a functional preinitiation complex with RNA polymerase II and the general transcription factors. This chain is Mediator of RNA polymerase II transcription subunit 30 (MED30), found in Drosophila pseudoobscura pseudoobscura (Fruit fly).